We begin with the raw amino-acid sequence, 359 residues long: 3-isopropylmalate dehydrogenase (359 aa).

Residue 76 to 89 (GPKWDDPSAKTRPE) coordinates NAD(+). 4 residues coordinate substrate: Arg-96, Arg-106, Arg-134, and Asp-223. Mg(2+)-binding residues include Asp-223, Asp-247, and Asp-251. 281–293 (GSAPDIAGKSVAN) serves as a coordination point for NAD(+).

Belongs to the isocitrate and isopropylmalate dehydrogenases family. LeuB type 1 subfamily. Homodimer. It depends on Mg(2+) as a cofactor. Requires Mn(2+) as cofactor.

Its subcellular location is the cytoplasm. The catalysed reaction is (2R,3S)-3-isopropylmalate + NAD(+) = 4-methyl-2-oxopentanoate + CO2 + NADH. It participates in amino-acid biosynthesis; L-leucine biosynthesis; L-leucine from 3-methyl-2-oxobutanoate: step 3/4. Catalyzes the oxidation of 3-carboxy-2-hydroxy-4-methylpentanoate (3-isopropylmalate) to 3-carboxy-4-methyl-2-oxopentanoate. The product decarboxylates to 4-methyl-2 oxopentanoate. The chain is 3-isopropylmalate dehydrogenase from Rhodopirellula baltica (strain DSM 10527 / NCIMB 13988 / SH1).